Consider the following 129-residue polypeptide: Small ribosomal subunit protein uS11 (129 aa).

Belongs to the universal ribosomal protein uS11 family. Part of the 30S ribosomal subunit. Interacts with proteins S7 and S18. Binds to IF-3.

Functionally, located on the platform of the 30S subunit, it bridges several disparate RNA helices of the 16S rRNA. Forms part of the Shine-Dalgarno cleft in the 70S ribosome. This Hydrogenovibrio crunogenus (strain DSM 25203 / XCL-2) (Thiomicrospira crunogena) protein is Small ribosomal subunit protein uS11.